The following is a 255-amino-acid chain: Hydroxyacylglutathione hydrolase (255 aa).

Positions 56, 58, 60, 61, 114, 133, and 171 each coordinate Zn(2+).

Belongs to the metallo-beta-lactamase superfamily. Glyoxalase II family. In terms of assembly, monomer. It depends on Zn(2+) as a cofactor.

It catalyses the reaction an S-(2-hydroxyacyl)glutathione + H2O = a 2-hydroxy carboxylate + glutathione + H(+). It functions in the pathway secondary metabolite metabolism; methylglyoxal degradation; (R)-lactate from methylglyoxal: step 2/2. Functionally, thiolesterase that catalyzes the hydrolysis of S-D-lactoyl-glutathione to form glutathione and D-lactic acid. The chain is Hydroxyacylglutathione hydrolase from Rhodopseudomonas palustris (strain HaA2).